Consider the following 370-residue polypeptide: MTEKSWFETIFCCCCHRTPIIRREIKLGCFGIGSAGKTTFLKVLKGEDPRDLLRTNGFSTVKMEYDETFHLTIYDVGGDKGIRGIWSNYYAEVHGIIYVIDYSTDETFTESIEALHSLTSNPHVQKKPIFLLLNNQNNREFDDVEISNETKIQAGQHKIVLFSHFNKYNGYLDNIKSATLTVMARAKKDRNEYQEQFVRFIDSISEHYVELSEGVKTAELALRIRQEEAKEQRRLMQMKVEHDALKADVAGLELRNQPPVQPPIPPDPPSDPKSASVHIEESPPMSLASSTIPSDIIQSTPETGTPRDPVNFCRISQTSTKPVSPESNSVKEEPTIILKDNYFLPPKAPGRQYSRIQRIQNVLNNRVVPK.

Residues Cys12, Cys13, Cys14, and Cys15 are each lipidated (S-palmitoyl cysteine). GTP-binding positions include 31-38 (GIGSAGKT), 75-79 (DVGGD), and 134-137 (NNQN). Lys239 participates in a covalent cross-link: Glycyl lysine isopeptide (Lys-Gly) (interchain with G-Cter in SUMO). The disordered stretch occupies residues 255–331 (RNQPPVQPPI…PVSPESNSVK (77 aa)). Positions 259–271 (PVQPPIPPDPPSD) are enriched in pro residues. 2 stretches are compositionally biased toward polar residues: residues 287–303 (LASSTIPSDIIQSTPET) and 314–328 (RISQTSTKPVSPESN). Residue Lys331 forms a Glycyl lysine isopeptide (Lys-Gly) (interchain with G-Cter in SUMO) linkage. An RVVP region region spans residues 366–369 (RVVP).

It belongs to the small GTPase superfamily. Arf family. Monomer. Post-translationally, sumoylation regulates the targeting of membrane sensory receptors to the cilium. As to expression, specifically expressed in ciliated sensory neurons throughout development in both hermaphrodites.

It is found in the cell projection. It localises to the cilium membrane. Its function is as follows. Cilium-specific protein required to control the microtubule-based, ciliary axoneme structure. Required for normal sensory cilium function. May act by maintaining the association between IFT subcomplexes A and B. This Caenorhabditis elegans protein is ADP-ribosylation factor-like protein 13B (arl-13).